Consider the following 381-residue polypeptide: uncharacterized protein (381 aa).

Disordered stretches follow at residues 1 to 20 and 36 to 381; these read MPYY…FDPT and IPPS…EDDE. Positions 9–18 are enriched in acidic residues; it reads NDVDDFDEFD. Composition is skewed to basic and acidic residues over residues 166 to 175 and 186 to 237; these read TEVEYGRRPE and SESE…EGYR. A phosphoserine mark is found at S339, S346, and S357. A compositionally biased stretch (basic residues) spans 364–374; it reads KKHRHKHHHQK.

This is an uncharacterized protein from Arabidopsis thaliana (Mouse-ear cress).